The following is a 247-amino-acid chain: tRNA uridine(34) hydroxylase (247 aa).

The region spanning 124-218 is the Rhodanese domain; sequence TKQNVIVIDT…YLEDTQNKNN (95 aa). Cys178 (cysteine persulfide intermediate) is an active-site residue.

This sequence belongs to the TrhO family.

The enzyme catalyses uridine(34) in tRNA + AH2 + O2 = 5-hydroxyuridine(34) in tRNA + A + H2O. In terms of biological role, catalyzes oxygen-dependent 5-hydroxyuridine (ho5U) modification at position 34 in tRNAs. The polypeptide is tRNA uridine(34) hydroxylase (Rickettsia akari (strain Hartford)).